Consider the following 451-residue polypeptide: MKTKLNSSNMQLLLFVFLAWDPARLVLANIQEDEAKNNITIFTRILDRLLDGYDNRLRPGLGDSITEVFTNIYVTSFGPVSDTDMEYTIDVFFRQKWKDERLKFKGPMNILRLNNLMASKIWTPDTFFHNGKKSVAHNMTMPNKLLRIQDDGTLLYTMRLTVQAECPMHLEDFPMDAHSCPLKFGSYAYTTSEVTYIWTYNASDSVQVAPDGSRLNQYDLPGQSIGKETIKSSTGEYTVMTAHFHLKRKIGYFVIQTYLPCIMTVILSQVSFWLNRESVPARTVFGVTTVLTMTTLSISARNSLPKVAYATAMDWFIAVCYAFVFSALIEFATVNYFTKRGWAWDGKSVVNDKKKEKASVMIQNNAYAVAVANYAPNLSKDPVLSTISKSATTPEPNKKPENKPAEAKKTFNSVSKIDRMSRIVFPVLFGTFNLVYWATYLNREPVLGVSP.

Residues M1–A28 form the signal peptide. Residues N29–K249 are Extracellular-facing. Residue N38 is glycosylated (N-linked (GlcNAc...) asparagine). R94 provides a ligand contact to 4-aminobutanoate. The N-linked (GlcNAc...) asparagine glycan is linked to N138. T157 serves as a coordination point for 4-aminobutanoate. An intrachain disulfide couples C166 to C180. An N-linked (GlcNAc...) asparagine glycan is attached at N201. Residues I250 to V270 form a helical membrane-spanning segment. Topologically, residues S271–P280 are cytoplasmic. Residues A281–A300 form a helical membrane-spanning segment. At R301–T311 the chain is on the extracellular side. A helical membrane pass occupies residues A312–A332. Residues T333–M420 lie on the Cytoplasmic side of the membrane. Residues S421–L441 traverse the membrane as a helical segment. At N442–P451 the chain is on the extracellular side.

It belongs to the ligand-gated ion channel (TC 1.A.9) family. Gamma-aminobutyric acid receptor (TC 1.A.9.5) subfamily. GABRA2 sub-subfamily. Heteropentamer, formed by a combination of alpha (GABRA1-6), beta (GABRB1-3), gamma (GABRG1-3), delta (GABRD), epsilon (GABRE), rho (GABRR1-3), pi (GABRP) and theta (GABRQ) subunits, each subunit exhibiting distinct physiological and pharmacological properties. Interacts with UBQLN1. Interacts with KIF21B. Interacts with LHFPL4. Interacts with SHISA7; interaction leads to the regulation of GABA(A) receptor trafficking, channel deactivation kinetics and pharmacology. In terms of processing, glycosylated.

The protein resides in the postsynaptic cell membrane. It localises to the cell membrane. Its subcellular location is the cytoplasmic vesicle membrane. It is found in the cell projection. The protein localises to the dendrite. The catalysed reaction is chloride(in) = chloride(out). Its activity is regulated as follows. Activated by pentobarbital. Inhibited by the antagonist bicuculline. Functionally, alpha subunit of the heteropentameric ligand-gated chloride channel gated by gamma-aminobutyric acid (GABA), a major inhibitory neurotransmitter in the brain. GABA-gated chloride channels, also named GABA(A) receptors (GABAAR), consist of five subunits arranged around a central pore and contain GABA active binding site(s) located at the alpha and beta subunit interface(s). When activated by GABA, GABAARs selectively allow the flow of chloride anions across the cell membrane down their electrochemical gradient. Chloride influx into the postsynaptic neuron following GABAAR opening decreases the neuron ability to generate a new action potential, thereby reducing nerve transmission. The alpha-2 subunit exhibits synaptogenic activity together with beta-2 and very little to no activity together with beta-3, the gamma-2 subunit being necessary but not sufficient to induce rapid synaptic contacts formation. The chain is Gamma-aminobutyric acid receptor subunit alpha-2 (GABRA2) from Bos taurus (Bovine).